Here is a 188-residue protein sequence, read N- to C-terminus: NAD(P)H-quinone oxidoreductase subunit J (188 aa).

Over residues 1–12 the composition is skewed to polar residues; the sequence is MSETPSKQTAAS. Residues 1–23 form a disordered region; that stretch reads MSETPSKQTAASDETGAVVAPEP.

The protein belongs to the complex I 30 kDa subunit family. NDH-1 can be composed of about 15 different subunits; different subcomplexes with different compositions have been identified which probably have different functions.

It localises to the cellular thylakoid membrane. The enzyme catalyses a plastoquinone + NADH + (n+1) H(+)(in) = a plastoquinol + NAD(+) + n H(+)(out). It catalyses the reaction a plastoquinone + NADPH + (n+1) H(+)(in) = a plastoquinol + NADP(+) + n H(+)(out). Functionally, NDH-1 shuttles electrons from an unknown electron donor, via FMN and iron-sulfur (Fe-S) centers, to quinones in the respiratory and/or the photosynthetic chain. The immediate electron acceptor for the enzyme in this species is believed to be plastoquinone. Couples the redox reaction to proton translocation, and thus conserves the redox energy in a proton gradient. Cyanobacterial NDH-1 also plays a role in inorganic carbon-concentration. The chain is NAD(P)H-quinone oxidoreductase subunit J from Synechococcus sp. (strain CC9605).